The sequence spans 342 residues: Sorting nexin-15 (342 aa).

Residues 1 to 130 (MSRQAKDDFL…EFFRGGEVTR (130 aa)) form the PX domain. 4 residues coordinate a 1,2-diacyl-sn-glycero-3-phospho-(1D-myo-inositol-3-phosphate): Arg-51, Ser-53, Arg-87, and Arg-96. Residue Arg-105 is modified to Omega-N-methylarginine. Residues Ser-201 and Ser-227 each carry the phosphoserine modification. Positions 245–267 (DQEPWEPGGQEEEEDGEGGPTPA) are disordered. The 78-residue stretch at 265–342 (TPAYLSQATE…LRLHLSQLPP (78 aa)) folds into the MIT domain.

Belongs to the sorting nexin family. Homodimer. Interacts with SNX1, SNX2 and SNX4. Widely expressed.

Its subcellular location is the cytoplasm. The protein localises to the membrane. It localises to the cytoplasmic vesicle membrane. In terms of biological role, may be involved in several stages of intracellular trafficking. Overexpression of SNX15 disrupts the normal trafficking of proteins from the plasma membrane to recycling endosomes or the TGN. In Homo sapiens (Human), this protein is Sorting nexin-15 (SNX15).